A 304-amino-acid chain; its full sequence is UDP-N-acetylenolpyruvoylglucosamine reductase (304 aa).

The 166-residue stretch at 33 to 198 (KVGGPVDILL…LRATFNLVNG (166 aa)) folds into the FAD-binding PCMH-type domain. Residue arginine 177 is part of the active site. Serine 227 serves as the catalytic Proton donor. The active site involves glutamate 297.

This sequence belongs to the MurB family. Requires FAD as cofactor.

The protein localises to the cytoplasm. The enzyme catalyses UDP-N-acetyl-alpha-D-muramate + NADP(+) = UDP-N-acetyl-3-O-(1-carboxyvinyl)-alpha-D-glucosamine + NADPH + H(+). It functions in the pathway cell wall biogenesis; peptidoglycan biosynthesis. In terms of biological role, cell wall formation. In Clostridium beijerinckii (strain ATCC 51743 / NCIMB 8052) (Clostridium acetobutylicum), this protein is UDP-N-acetylenolpyruvoylglucosamine reductase.